Here is an 81-residue protein sequence, read N- to C-terminus: Large ribosomal subunit protein bL28 (81 aa).

It belongs to the bacterial ribosomal protein bL28 family.

This is Large ribosomal subunit protein bL28 from Gloeobacter violaceus (strain ATCC 29082 / PCC 7421).